The following is a 315-amino-acid chain: GTPase Era (315 aa).

Residues 21 to 190 (RSGFVAIVGR…QSALEARLDP (170 aa)) form the Era-type G domain. The G1 stretch occupies residues 29–36 (GRPNVGKS). GTP is bound at residue 29–36 (GRPNVGKS). The tract at residues 55–59 (QTTRN) is G2. Residues 76–79 (DTPG) form a G3 region. Residues 76–80 (DTPGI) and 138–141 (NKQD) each bind GTP. The tract at residues 138–141 (NKQD) is G4. The tract at residues 169–171 (FSA) is G5. In terms of domain architecture, KH type-2 spans 221-297 (TRQEVPHSVA…YLKLFVKVEP (77 aa)).

The protein belongs to the TRAFAC class TrmE-Era-EngA-EngB-Septin-like GTPase superfamily. Era GTPase family. In terms of assembly, monomer.

It localises to the cytoplasm. Its subcellular location is the cell inner membrane. Its function is as follows. An essential GTPase that binds both GDP and GTP, with rapid nucleotide exchange. Plays a role in 16S rRNA processing and 30S ribosomal subunit biogenesis and possibly also in cell cycle regulation and energy metabolism. This is GTPase Era from Synechocystis sp. (strain ATCC 27184 / PCC 6803 / Kazusa).